The chain runs to 335 residues: MTAVNDFLTPRSIAVNAINQTHAKVVLEPLERGFGHTLGTALRRILISSMPGCAITEVEIDGVQHEYSSIEGVQEDVINILLNLKGVALKMEDSEETTLELVKKGPGVVTANDIQRDHSVEIVNPDHLICTITGDTELRVKLKVQKGRGYVAADSRQSEDDETRGIGRLQLDASYSPVRRVAYVVEAARVEQRTDLDKLVIDLETDGTIEPEEAIRRAATILQQQIAVFVDLEQDAKPEPKQEREEIDPILLRPVDDLELTVRSANCLKAENIYYIGDLVQRTEVELLKTPNLGKKSLTEIKDVLASKGLSLGMRLENWPPVSLRDDDRLNAKLR.

The alpha N-terminal domain (alpha-NTD) stretch occupies residues 1–233; sequence MTAVNDFLTP…QQIAVFVDLE (233 aa). Positions 247 to 335 are alpha C-terminal domain (alpha-CTD); the sequence is IDPILLRPVD…DDDRLNAKLR (89 aa).

Belongs to the RNA polymerase alpha chain family. In terms of assembly, homodimer. The RNAP catalytic core consists of 2 alpha, 1 beta, 1 beta' and 1 omega subunit. When a sigma factor is associated with the core the holoenzyme is formed, which can initiate transcription.

The enzyme catalyses RNA(n) + a ribonucleoside 5'-triphosphate = RNA(n+1) + diphosphate. Functionally, DNA-dependent RNA polymerase catalyzes the transcription of DNA into RNA using the four ribonucleoside triphosphates as substrates. The polypeptide is DNA-directed RNA polymerase subunit alpha (Alcanivorax borkumensis (strain ATCC 700651 / DSM 11573 / NCIMB 13689 / SK2)).